The sequence spans 159 residues: uncharacterized protein (159 aa).

A divalent metal cation is bound by residues histidine 44, histidine 124, and histidine 128.

Belongs to the DinB family.

This is an uncharacterized protein from Bacillus subtilis (strain 168).